The primary structure comprises 598 residues: Serine/threonine-protein kinase PLK1 (598 aa).

Residues 1-26 are disordered; sequence MAQVAGKKLTVAPEAGKPPGIPGSSS. Phosphoserine occurs at positions 25 and 26. The Protein kinase domain maps to 44–296; the sequence is YLRGRFLGKG…IDDLLNDEFF (253 aa). ATP contacts are provided by residues 50 to 58, K73, and E122; that span reads LGKGGFAKC. D167 acts as the Proton acceptor in catalysis. Residues 169–172 and D185 each bind ATP; that span reads KLGN. The activation loop stretch occupies residues 185 to 212; that stretch reads DFGLATKVEYDGERKKTLCGTPNYIAPE. At T201 the chain carries Phosphothreonine. 2 positions are modified to phosphoserine; by autocatalysis: S260 and S326. The D-box that targets the protein for proteasomal degradation in anaphase motif lies at 328 to 331; the sequence is RKPL. A disordered region spans residues 336–360; the sequence is KGQDSPLVEKQSVPAKEEEMQQPES. S340 carries the post-translational modification Phosphoserine. The POLO box 1 domain maps to 404-482; sequence WVSKWVDYSD…LKYFRNYMSE (79 aa). The tract at residues 487–501 is linker; it reads AGANITPREGDELAR. One can recognise a POLO box 2 domain in the interval 504 to 586; sequence FLRTWFRTRS…ARTMVEKLQS (83 aa). Residues 532-534 form an important for interaction with phosphorylated proteins region; the sequence is HTK.

This sequence belongs to the protein kinase superfamily. Ser/Thr protein kinase family. Interacts with plk1 and kif2a. Interacts with fbxo5. In terms of processing, activated by phosphorylation on Thr-201 during M phase. Post-translationally, protein levels are down-regulated by proteasomal degradation in anaphase.

The protein localises to the nucleus. It localises to the cytoplasm. The protein resides in the cytoskeleton. Its subcellular location is the microtubule organizing center. It is found in the centrosome. The protein localises to the spindle. It localises to the midbody. It catalyses the reaction L-seryl-[protein] + ATP = O-phospho-L-seryl-[protein] + ADP + H(+). The catalysed reaction is L-threonyl-[protein] + ATP = O-phospho-L-threonyl-[protein] + ADP + H(+). In terms of biological role, plays multiple essential roles during mitosis. Phosphorylates the N-terminal domain of cdc25, which leads to cyclin b-cdc2 activation and mitotic entry. Also required for organization of bipolar spindles, and for exit from mitosis. Phosphorylates tpx2. This chain is Serine/threonine-protein kinase PLK1 (plk1), found in Xenopus tropicalis (Western clawed frog).